The chain runs to 585 residues: Arginine--tRNA ligase (585 aa).

A 'HIGH' region motif is present at residues 127–137 (PNTNKPLHVGH).

It belongs to the class-I aminoacyl-tRNA synthetase family. As to quaternary structure, monomer.

It is found in the cytoplasm. The catalysed reaction is tRNA(Arg) + L-arginine + ATP = L-arginyl-tRNA(Arg) + AMP + diphosphate. This Borrelia duttonii (strain Ly) protein is Arginine--tRNA ligase.